Here is a 336-residue protein sequence, read N- to C-terminus: Ferredoxin--NADP reductase 1 (336 aa).

The FAD site is built by Glu-37, Lys-45, Phe-50, Val-90, Leu-125, Asp-287, and Thr-328.

Belongs to the ferredoxin--NADP reductase type 2 family. As to quaternary structure, homodimer. FAD is required as a cofactor.

The catalysed reaction is 2 reduced [2Fe-2S]-[ferredoxin] + NADP(+) + H(+) = 2 oxidized [2Fe-2S]-[ferredoxin] + NADPH. The protein is Ferredoxin--NADP reductase 1 (ycgT) of Bacillus subtilis (strain 168).